The chain runs to 425 residues: Histidine--tRNA ligase (425 aa).

Belongs to the class-II aminoacyl-tRNA synthetase family. As to quaternary structure, homodimer.

The protein localises to the cytoplasm. It carries out the reaction tRNA(His) + L-histidine + ATP = L-histidyl-tRNA(His) + AMP + diphosphate + H(+). This chain is Histidine--tRNA ligase, found in Tolumonas auensis (strain DSM 9187 / NBRC 110442 / TA 4).